A 396-amino-acid chain; its full sequence is Elongation factor Tu (396 aa).

In terms of domain architecture, tr-type G spans 10–206 (KPHVNVGTIG…ALDTYIPTPE (197 aa)). Positions 19–26 (GHVDHGKT) are G1. 19–26 (GHVDHGKT) contacts GTP. Residue threonine 26 participates in Mg(2+) binding. A G2 region spans residues 60-64 (GITIN). A G3 region spans residues 81 to 84 (DCPG). GTP-binding positions include 81-85 (DCPGH) and 136-139 (NKCD). Residues 136-139 (NKCD) are G4. Positions 174-176 (SAK) are G5.

The protein belongs to the TRAFAC class translation factor GTPase superfamily. Classic translation factor GTPase family. EF-Tu/EF-1A subfamily. As to quaternary structure, monomer.

It localises to the cytoplasm. The catalysed reaction is GTP + H2O = GDP + phosphate + H(+). In terms of biological role, GTP hydrolase that promotes the GTP-dependent binding of aminoacyl-tRNA to the A-site of ribosomes during protein biosynthesis. The chain is Elongation factor Tu from Burkholderia cepacia (Pseudomonas cepacia).